A 303-amino-acid chain; its full sequence is Phenoloxidase-activating factor 2 (303 aa).

A disordered region spans residues 1-24 (PDRRPPEDPITPPPPTKEEQRAGC). One can recognise a Peptidase S1 domain in the interval 36-292 (IIGDKDGEAK…LRDWIDDKVA (257 aa)). Cystine bridges form between Cys-173/Cys-247, Cys-206/Cys-227, and Cys-237/Cys-268.

The protein belongs to the peptidase S1 family. Heterodimer.

The protein resides in the secreted. Functionally, binds and activates processed prophenoloxidases PPO1 and PPO2 and thus is involved in the activation of the prophenoloxidase cascade probably following the recognition of pathogen-derived products. Binds the A.niger cell wall component alpha-1,3-glucan, a fungal pathogen-associated molecular pattern (PAMP) that activates the host immune response. This is Phenoloxidase-activating factor 2 (LOC113510063) from Galleria mellonella (Greater wax moth).